The chain runs to 118 residues: Small ribosomal subunit protein uS13 (118 aa).

The tract at residues 94–118 (SLPLRGQRTKTNARTRKGPRKPIRK) is disordered.

It belongs to the universal ribosomal protein uS13 family. Part of the 30S ribosomal subunit. Forms a loose heterodimer with protein S19. Forms two bridges to the 50S subunit in the 70S ribosome.

Located at the top of the head of the 30S subunit, it contacts several helices of the 16S rRNA. In the 70S ribosome it contacts the 23S rRNA (bridge B1a) and protein L5 of the 50S subunit (bridge B1b), connecting the 2 subunits; these bridges are implicated in subunit movement. Contacts the tRNAs in the A and P-sites. In Shewanella frigidimarina (strain NCIMB 400), this protein is Small ribosomal subunit protein uS13.